We begin with the raw amino-acid sequence, 509 residues long: MESLVSVCAQKLVCDHSSLRRALDLMPKELYPALFKAAFLGKKTLVLQDLVQTWPFAVLSFHKLLNSNRHCDPQLATEKPSKLCVQTVILGVITYLSDALTKGPEGPQAGRQRLRLLDMTGMQEEGLEQNPDTMSLWSRTVTLAKACIDVSKRHSEEVMQVSKRRRSCHINALPASSPLYIEVRVDLFVNSTSYGVLREALLVSSHSPLRLQCRDFRAEELSLRSTAGLLELLNPGSVRQIDLRFNNLGLSGLNVLLPHMAKFSHLQSLKLPYSNVDVRRLSPVMEEGLQSFASQLGQLGALKELNLGSSRLSGRLRQLLGGLQRPLESLELAFCSLLPMDLSYLSQSSHMSSLRKLDLSGNNLSEFLLTPFLHLLAEISGHLLYLDVMECKLADAHLSALMPILCRCSWLRYLGLFCNPISSDGLRMVLQNLVRLPELHLVVYPFPVDCYSDPTHFSSTAASLDSSFDHEKLTRVGEELQQMLVRAQRMDMVWTTDMYVQRTLDSLSL.

The stretch at 111–146 (RQRLRLLDMTGMQEEGLEQNPDTMSLWSRTVTLAKA) is one LRR 1; degenerate repeat. One copy of the LRR 2; degenerate repeat lies at 210 to 234 (RLQCRDFRAEELSLRSTAGLLELLN). The stretch at 235–262 (PGSVRQIDLRFNNLGLSGLNVLLPHMAK) is one LRR 3; degenerate repeat. The LRR 4; degenerate repeat unit spans residues 263–298 (FSHLQSLKLPYSNVDVRRLSPVMEEGLQSFASQLGQ). LRR repeat units follow at residues 299–323 (LGAL…LGGL), 324–355 (QRPL…SSLR), 356–374 (KLDL…PFLH), 380–407 (SGHL…ILCR), and 408–432 (CSWL…VLQN).

The protein belongs to the PRAME family. LRRC14 subfamily.

Its subcellular location is the cytoplasm. The protein is Leucine-rich repeat-containing protein 14 of Xenopus laevis (African clawed frog).